A 182-amino-acid polypeptide reads, in one-letter code: Ribosome-recycling factor (182 aa).

The protein belongs to the RRF family.

It is found in the cytoplasm. Responsible for the release of ribosomes from messenger RNA at the termination of protein biosynthesis. May increase the efficiency of translation by recycling ribosomes from one round of translation to another. The polypeptide is Ribosome-recycling factor (Synechococcus sp. (strain JA-2-3B'a(2-13)) (Cyanobacteria bacterium Yellowstone B-Prime)).